Consider the following 94-residue polypeptide: 2S albumin-like cysteine protease inhibitor (94 aa).

Disulfide bonds link cysteine 12–cysteine 35, cysteine 36–cysteine 82, and cysteine 48–cysteine 89.

Belongs to the 2S seed storage albumins family. In terms of tissue distribution, expressed in seeds (at protein level).

Cysteine protease inhibitor that likely functions in defense against insects by inhibiting cysteine proteases in the midgut of herbivore insects such as C.maculatus. Selectively inhibits cathepsin L, as well as papain, ficin and bromelain with lower efficiency. Shows antitumor activity, inhibiting the growth of prostate cancer cell lines PC3 and DU145, and the gastric cancer cell line Hs746T. No activity against cathepsin B or serine proteases (trypsin, human plasma kallikrein and elastase). The polypeptide is 2S albumin-like cysteine protease inhibitor (Araucaria angustifolia (Brazilian pine tree)).